A 123-amino-acid polypeptide reads, in one-letter code: Large ribosomal subunit protein uL18 (123 aa).

Belongs to the universal ribosomal protein uL18 family. In terms of assembly, part of the 50S ribosomal subunit; part of the 5S rRNA/L5/L18/L25 subcomplex. Contacts the 5S and 23S rRNAs.

In terms of biological role, this is one of the proteins that bind and probably mediate the attachment of the 5S RNA into the large ribosomal subunit, where it forms part of the central protuberance. This chain is Large ribosomal subunit protein uL18, found in Chlamydia pneumoniae (Chlamydophila pneumoniae).